Here is a 359-residue protein sequence, read N- to C-terminus: Peptide chain release factor 1 (359 aa).

Position 236 is an N5-methylglutamine (Gln236). The tract at residues 286-305 (KKEMERSTMRKSQIGSGDRS) is disordered.

The protein belongs to the prokaryotic/mitochondrial release factor family. In terms of processing, methylated by PrmC. Methylation increases the termination efficiency of RF1.

It is found in the cytoplasm. Its function is as follows. Peptide chain release factor 1 directs the termination of translation in response to the peptide chain termination codons UAG and UAA. The chain is Peptide chain release factor 1 from Wolbachia pipientis wMel.